The following is a 409-amino-acid chain: Elongation factor Tu (409 aa).

Residues 10-214 form the tr-type G domain; that stretch reads KPHVNVGTIG…AVDSYIPTPE (205 aa). The segment at 19-26 is G1; that stretch reads GHVDHGKT. 19-26 serves as a coordination point for GTP; that stretch reads GHVDHGKT. T26 contacts Mg(2+). The tract at residues 60 to 64 is G2; the sequence is GITIN. The segment at 81–84 is G3; the sequence is DCPG. GTP contacts are provided by residues 81–85 and 136–139; these read DCPGH and NKAD. Residues 136–139 are G4; sequence NKAD. The interval 174-176 is G5; the sequence is SAL.

Belongs to the TRAFAC class translation factor GTPase superfamily. Classic translation factor GTPase family. EF-Tu/EF-1A subfamily. As to quaternary structure, monomer.

Its subcellular location is the cytoplasm. It catalyses the reaction GTP + H2O = GDP + phosphate + H(+). Functionally, GTP hydrolase that promotes the GTP-dependent binding of aminoacyl-tRNA to the A-site of ribosomes during protein biosynthesis. The chain is Elongation factor Tu from Synechococcus sp. (strain JA-2-3B'a(2-13)) (Cyanobacteria bacterium Yellowstone B-Prime).